A 468-amino-acid chain; its full sequence is Ribosomal protein uS12 methylthiotransferase RimO (468 aa).

In terms of domain architecture, MTTase N-terminal spans 18–129 (PTVAFAHLGC…IVEVLERVEA (112 aa)). Residues cysteine 27, cysteine 63, cysteine 92, cysteine 167, cysteine 171, and cysteine 174 each coordinate [4Fe-4S] cluster. A Radical SAM core domain is found at 153–382 (TTGEAVAYLK…MTLQQPISAA (230 aa)). The TRAM domain occupies 385–456 (ARWVGRTVDA…IYDLRAEIVG (72 aa)).

This sequence belongs to the methylthiotransferase family. RimO subfamily. The cofactor is [4Fe-4S] cluster.

Its subcellular location is the cytoplasm. The catalysed reaction is L-aspartate(89)-[ribosomal protein uS12]-hydrogen + (sulfur carrier)-SH + AH2 + 2 S-adenosyl-L-methionine = 3-methylsulfanyl-L-aspartate(89)-[ribosomal protein uS12]-hydrogen + (sulfur carrier)-H + 5'-deoxyadenosine + L-methionine + A + S-adenosyl-L-homocysteine + 2 H(+). Catalyzes the methylthiolation of an aspartic acid residue of ribosomal protein uS12. In Synechococcus sp. (strain WH7803), this protein is Ribosomal protein uS12 methylthiotransferase RimO.